Consider the following 247-residue polypeptide: Chymase (247 aa).

The signal sequence occupies residues 1 to 19 (MLLLPLPLLLFFLCSRAEA). The propeptide at 20-21 (GE) is activation peptide. The 224-residue stretch at 22–245 (IIGGTECKPH…YRPWINKILQ (224 aa)) folds into the Peptidase S1 domain. A disulfide bridge links Cys-51 with Cys-67. His-66 acts as the Charge relay system in catalysis. Asn-80 and Asn-103 each carry an N-linked (GlcNAc...) asparagine glycan. Asp-110 acts as the Charge relay system in catalysis. Disulfide bonds link Cys-144–Cys-209 and Cys-175–Cys-188. The active-site Charge relay system is Ser-203.

Belongs to the peptidase S1 family. Granzyme subfamily.

It localises to the secreted. It is found in the cytoplasmic granule. It catalyses the reaction Preferential cleavage: Phe-|-Xaa &gt; Tyr-|-Xaa &gt; Trp-|-Xaa &gt; Leu-|-Xaa.. Major secreted protease of mast cells with suspected roles in vasoactive peptide generation, extracellular matrix degradation, and regulation of gland secretion. The polypeptide is Chymase (CMA1) (Macaca fascicularis (Crab-eating macaque)).